Consider the following 539-residue polypeptide: Glutathione synthetase, chloroplastic (539 aa).

The transit peptide at 1 to 61 (MGSGCSSLSY…SPLRCGRSFK (61 aa)) directs the protein to the chloroplast. Substrate is bound at residue arginine 193. Glutamate 209 is a binding site for ATP. The Mg(2+) site is built by glutamate 209 and asparagine 211. Substrate-binding positions include 213–216 (ISCS), 281–283 (ERN), glutamine 287, and 335–338 (RSGY). Residues lysine 374, 428–437 (KPQREGGGNN), tyrosine 439, 464–467 (MQRI), and glutamate 490 contribute to the ATP site. A Mg(2+)-binding site is contributed by glutamate 432. Position 515 (arginine 515) interacts with substrate. The ATP site is built by lysine 517 and glutamate 523. 526–527 (VA) contacts substrate.

Belongs to the eukaryotic GSH synthase family. Homodimer. It depends on Mg(2+) as a cofactor.

It is found in the plastid. Its subcellular location is the chloroplast. It carries out the reaction gamma-L-glutamyl-L-cysteine + glycine + ATP = glutathione + ADP + phosphate + H(+). It participates in sulfur metabolism; glutathione biosynthesis; glutathione from L-cysteine and L-glutamate: step 2/2. This chain is Glutathione synthetase, chloroplastic (GSH2), found in Arabidopsis thaliana (Mouse-ear cress).